We begin with the raw amino-acid sequence, 264 residues long: 2-C-methyl-D-erythritol 4-phosphate cytidylyltransferase (264 aa).

Positions 234 to 264 are disordered; that stretch reads ARDPESAHPQSSVLASAFSGPGSRVSGPEEI.

The protein belongs to the IspD/TarI cytidylyltransferase family. IspD subfamily.

It catalyses the reaction 2-C-methyl-D-erythritol 4-phosphate + CTP + H(+) = 4-CDP-2-C-methyl-D-erythritol + diphosphate. Its pathway is isoprenoid biosynthesis; isopentenyl diphosphate biosynthesis via DXP pathway; isopentenyl diphosphate from 1-deoxy-D-xylulose 5-phosphate: step 2/6. Its function is as follows. Catalyzes the formation of 4-diphosphocytidyl-2-C-methyl-D-erythritol from CTP and 2-C-methyl-D-erythritol 4-phosphate (MEP). This is 2-C-methyl-D-erythritol 4-phosphate cytidylyltransferase from Xanthomonas euvesicatoria pv. vesicatoria (strain 85-10) (Xanthomonas campestris pv. vesicatoria).